The primary structure comprises 223 residues: UPF0502 protein Sbal223_2520 (223 aa).

The protein belongs to the UPF0502 family.

The protein is UPF0502 protein Sbal223_2520 of Shewanella baltica (strain OS223).